A 967-amino-acid polypeptide reads, in one-letter code: Phosphoenolpyruvate carboxylase (967 aa).

Residue Ser11 is modified to Phosphoserine. Active-site residues include His172 and Lys601.

It belongs to the PEPCase type 1 family. In terms of assembly, homotetramer. The cofactor is Mg(2+).

It is found in the cytoplasm. It catalyses the reaction oxaloacetate + phosphate = phosphoenolpyruvate + hydrogencarbonate. Its pathway is photosynthesis; C3 acid pathway. Its activity is regulated as follows. By light-reversible phosphorylation. Through the carboxylation of phosphoenolpyruvate (PEP) it forms oxaloacetate, a four-carbon dicarboxylic acid source for the tricarboxylic acid cycle. In Flaveria pringlei, this protein is Phosphoenolpyruvate carboxylase (PPCA1).